Consider the following 336-residue polypeptide: Inactive serine/threonine-protein kinase PLK5 (336 aa).

A Protein kinase; truncated domain is found at Met-1–Phe-65. Disordered stretches follow at residues Pro-109–Glu-135 and Gly-224–Pro-245. Residues Leu-255–Ile-336 enclose the POLO box domain.

The protein belongs to the protein kinase superfamily. Ser/Thr protein kinase family. CDC5/Polo subfamily. In terms of tissue distribution, expressed in the brain, neurons and glial cells. Also expressed in highly differentiated cells, such as the serous acini in the parotid gland, distal and proximal tubules of the kidney, tubules of the seminal gland, Kupffer cells and some hepatocytes in the liver, and some cells in the germinal center of lymph nodes (at protein level).

The protein resides in the nucleus. Its subcellular location is the nucleolus. It is found in the cytoplasm. In terms of biological role, inactive serine/threonine-protein kinase that plays a role in cell cycle progression and neuronal differentiation. This is Inactive serine/threonine-protein kinase PLK5 (PLK5) from Homo sapiens (Human).